Here is a 337-residue protein sequence, read N- to C-terminus: Phenylalanine--tRNA ligase alpha subunit (337 aa).

A Mg(2+)-binding site is contributed by Glu-252.

This sequence belongs to the class-II aminoacyl-tRNA synthetase family. Phe-tRNA synthetase alpha subunit type 1 subfamily. As to quaternary structure, tetramer of two alpha and two beta subunits. Requires Mg(2+) as cofactor.

It is found in the cytoplasm. It carries out the reaction tRNA(Phe) + L-phenylalanine + ATP = L-phenylalanyl-tRNA(Phe) + AMP + diphosphate + H(+). The protein is Phenylalanine--tRNA ligase alpha subunit of Francisella tularensis subsp. mediasiatica (strain FSC147).